The sequence spans 463 residues: Adenylosuccinate synthetase, chloroplastic (463 aa).

Residues glycine 44–lysine 50 and glycine 72–threonine 74 contribute to the GTP site. The Proton acceptor role is filled by aspartate 45. Positions 45 and 72 each coordinate Mg(2+). Residues aspartate 45–lysine 48, asparagine 70–histidine 73, threonine 164, arginine 178, asparagine 256, threonine 271, and arginine 335 contribute to the IMP site. Histidine 73 serves as the catalytic Proton donor. Threonine 331–arginine 337 contacts substrate. Residues arginine 337, lysine 363–aspartate 365, and glycine 446–glycine 448 contribute to the GTP site.

This sequence belongs to the adenylosuccinate synthetase family. Homodimer. Mg(2+) serves as cofactor.

Its subcellular location is the plastid. The protein localises to the chloroplast. It catalyses the reaction IMP + L-aspartate + GTP = N(6)-(1,2-dicarboxyethyl)-AMP + GDP + phosphate + 2 H(+). The protein operates within purine metabolism; AMP biosynthesis via de novo pathway; AMP from IMP: step 1/2. Plays an important role in the de novo pathway and in the salvage pathway of purine nucleotide biosynthesis. Catalyzes the first committed step in the biosynthesis of AMP from IMP. The chain is Adenylosuccinate synthetase, chloroplastic from Chlamydomonas reinhardtii (Chlamydomonas smithii).